Reading from the N-terminus, the 342-residue chain is MFSSLYPLARASLFKMDAEDAHHLTLRMLGAAGRTGLACALSPRVPDAPRTVMGLSFRNPVGLAAGLDKDGAAIDGFAALGFGFIEVGTVTPRAQPGNPRPRMFRLPEADAIINRMGFNNSGVDQFVKNVQAARYRGVLGLNIGKNADTPIERAADDYLYCLERVYPFASYVTINISSPNTKNLRQLQGAGELDALLAALKDKQRRLADLHGKLVPLALKIAPDLDDEQVKEIAATLLRHDIEGVIATNTTLSREAVKGLPHADEAGGLSGRPVFDASNAVIRKLRAELGDAVPIIGVGGIFSGEDARAKLAAGAALVQLYTGFIYRGPALVAECVKAIARG.

Residues 65 to 69 (AGLDK) and Thr89 contribute to the FMN site. Lys69 is a binding site for substrate. 114–118 (NRMGF) provides a ligand contact to substrate. Residues Asn142 and Asn175 each contribute to the FMN site. A substrate-binding site is contributed by Asn175. Ser178 acts as the Nucleophile in catalysis. Position 180 (Asn180) interacts with substrate. 2 residues coordinate FMN: Lys220 and Thr248. 249 to 250 (NT) provides a ligand contact to substrate. Residues Gly271, Gly300, and 321–322 (YT) contribute to the FMN site.

It belongs to the dihydroorotate dehydrogenase family. Type 2 subfamily. In terms of assembly, monomer. The cofactor is FMN.

Its subcellular location is the cell membrane. The enzyme catalyses (S)-dihydroorotate + a quinone = orotate + a quinol. Its pathway is pyrimidine metabolism; UMP biosynthesis via de novo pathway; orotate from (S)-dihydroorotate (quinone route): step 1/1. Its function is as follows. Catalyzes the conversion of dihydroorotate to orotate with quinone as electron acceptor. The chain is Dihydroorotate dehydrogenase (quinone) from Burkholderia pseudomallei (strain K96243).